We begin with the raw amino-acid sequence, 233 residues long: uncharacterized protein (233 aa).

The protein belongs to the asfivirus H233R family.

This is an uncharacterized protein from African swine fever virus (strain Badajoz 1971 Vero-adapted) (Ba71V).